Consider the following 392-residue polypeptide: S-adenosylmethionine synthase (392 aa).

H17 serves as a coordination point for ATP. D19 is a Mg(2+) binding site. E45 provides a ligand contact to K(+). Residues E58 and Q102 each contribute to the L-methionine site. Positions 102-112 (QSADIAQGVDA) are flexible loop. ATP-binding positions include 169 to 171 (DAK), 235 to 236 (KF), D244, 250 to 251 (RK), A267, and K271. L-methionine is bound at residue D244. K275 serves as a coordination point for L-methionine.

Belongs to the AdoMet synthase family. In terms of assembly, homotetramer; dimer of dimers. The cofactor is Mg(2+). Requires K(+) as cofactor.

It is found in the cytoplasm. It carries out the reaction L-methionine + ATP + H2O = S-adenosyl-L-methionine + phosphate + diphosphate. It functions in the pathway amino-acid biosynthesis; S-adenosyl-L-methionine biosynthesis; S-adenosyl-L-methionine from L-methionine: step 1/1. Catalyzes the formation of S-adenosylmethionine (AdoMet) from methionine and ATP. The overall synthetic reaction is composed of two sequential steps, AdoMet formation and the subsequent tripolyphosphate hydrolysis which occurs prior to release of AdoMet from the enzyme. This chain is S-adenosylmethionine synthase, found in Methylobacterium sp. (strain 4-46).